A 65-amino-acid chain; its full sequence is LTCLICPEKYCNKVHTCRNGENQCFKRFNERKLLGKRYTRGCAATCPEAKPREIVECCTTDRCNK.

5 disulfide bridges follow: C3/C24, C6/C11, C17/C42, C46/C57, and C58/C63.

Belongs to the three-finger toxin family. Ancestral subfamily. Orphan group II sub-subfamily. Expressed by the venom gland.

The protein localises to the secreted. Binds with low affinity to muscular (alpha-1-beta-1-delta-epsilon/CHRNA1-CHRNB1-CHRND-CHRNE) and very low affinity to neuronal (alpha-7/CHRNA7) nicotinic acetylcholine receptor (nAChR). This Naja haje haje (Egyptian cobra) protein is Weak toxin CM-11.